A 235-amino-acid polypeptide reads, in one-letter code: MSKSSKAYRAAAVKVDRTNLYTPLQAAKLAKETSSTRQDATVEVAIRLGVDSRKADQMVRGTVNLPHGTGKTARVAVFAVGEKADVAVAAGADVVGSDDLIEKIQGGWLEFDAAVATPDQMAKVGRIARVLGPRGLMPNPKTGTVTPDVAKAVADIKGGKINFRVDKQANLHFVIGKASFDEKRLAENYGAALEEVLRLKPSSSKGRYLKKVTVSTTMGPGIPVDPSITRNFTEE.

It belongs to the universal ribosomal protein uL1 family. Part of the 50S ribosomal subunit.

Functionally, binds directly to 23S rRNA. The L1 stalk is quite mobile in the ribosome, and is involved in E site tRNA release. Protein L1 is also a translational repressor protein, it controls the translation of the L11 operon by binding to its mRNA. The polypeptide is Large ribosomal subunit protein uL1 (Mycobacterium leprae (strain Br4923)).